The chain runs to 783 residues: Polyribonucleotide nucleotidyltransferase 1, mitochondrial (783 aa).

The N-terminal 45 residues, 1–45, are a transit peptide targeting the mitochondrion; sequence MAACRYCCSCLRLRPLSDGPFLLPRRDRALTQLQVRALWSSAGSR. K250, K264, K285, and K289 each carry N6-acetyllysine. An N6-succinyllysine modification is found at K552. One can recognise a KH domain in the interval 605-664; that stretch reads PVVETVQVPLSKRAKFVGPGGYNLKKLQAETGVTISQVDEETFSVFAPTPSAMHEARDFI. Positions 679–750 constitute an S1 motif domain; sequence GAVYTATITE…ADGRMRLSRK (72 aa). S754 and S782 each carry phosphoserine.

It belongs to the polyribonucleotide nucleotidyltransferase family. As to quaternary structure, homotrimer; in free form. Homooligomer. Component of the mitochondrial degradosome (mtEXO) complex which is a heteropentamer containing 2 copies of SUPV3L1 and 3 copies of PNPT1. As part of the mitochondrial degradosome complex, interacts with GRSF1 in an RNA-dependent manner; the interaction enhances the activity of the complex. Interacts with TCL1A; the interaction has no effect on PNPT1 exonuclease activity.

It is found in the cytoplasm. The protein resides in the mitochondrion matrix. The protein localises to the mitochondrion intermembrane space. It carries out the reaction RNA(n+1) + phosphate = RNA(n) + a ribonucleoside 5'-diphosphate. RNA-binding protein implicated in numerous RNA metabolic processes. Catalyzes the phosphorolysis of single-stranded polyribonucleotides processively in the 3'-to-5' direction. Mitochondrial intermembrane factor with RNA-processing exoribonulease activity. Component of the mitochondrial degradosome (mtEXO) complex, that degrades 3' overhang double-stranded RNA with a 3'-to-5' directionality in an ATP-dependent manner. Involved in the degradation of non-coding mitochondrial transcripts (MT-ncRNA) and tRNA-like molecules. Required for correct processing and polyadenylation of mitochondrial mRNAs. Plays a role as a cytoplasmic RNA import factor that mediates the translocation of small RNA components, like the 5S RNA, the RNA subunit of ribonuclease P and the mitochondrial RNA-processing (MRP) RNA, into the mitochondrial matrix. Plays a role in mitochondrial morphogenesis and respiration; regulates the expression of the electron transport chain (ETC) components at the mRNA and protein levels. In the cytoplasm, shows a 3'-to-5' exoribonuclease mediating mRNA degradation activity; degrades c-myc mRNA upon treatment with IFNB1/IFN-beta, resulting in a growth arrest in melanoma cells. Regulates the stability of specific mature miRNAs in melanoma cells; specifically and selectively degrades miR-221, preferentially. Also plays a role in RNA cell surveillance by cleaning up oxidized RNAs. Binds to the RNA subunit of ribonuclease P, MRP RNA and miR-221 microRNA. The chain is Polyribonucleotide nucleotidyltransferase 1, mitochondrial from Homo sapiens (Human).